The primary structure comprises 506 residues: 2-isopropylmalate synthase (506 aa).

Positions 4-266 constitute a Pyruvate carboxyltransferase domain; that stretch reads ILFMDTTLRD…EPSMTLKEIK (263 aa). Residues Asp-13, His-201, His-203, and Asn-237 each contribute to the Mn(2+) site. Positions 390–506 are regulatory domain; sequence NITQLQVHFV…KLKSFIQLVK (117 aa).

Belongs to the alpha-IPM synthase/homocitrate synthase family. LeuA type 1 subfamily. As to quaternary structure, homodimer. Mn(2+) is required as a cofactor.

Its subcellular location is the cytoplasm. The enzyme catalyses 3-methyl-2-oxobutanoate + acetyl-CoA + H2O = (2S)-2-isopropylmalate + CoA + H(+). It participates in amino-acid biosynthesis; L-leucine biosynthesis; L-leucine from 3-methyl-2-oxobutanoate: step 1/4. Its function is as follows. Catalyzes the condensation of the acetyl group of acetyl-CoA with 3-methyl-2-oxobutanoate (2-ketoisovalerate) to form 3-carboxy-3-hydroxy-4-methylpentanoate (2-isopropylmalate). The protein is 2-isopropylmalate synthase of Bacillus cereus (strain AH820).